Here is a 235-residue protein sequence, read N- to C-terminus: Ribonuclease 3 (235 aa).

The RNase III domain occupies leucine 7–glycine 134. Glutamate 47 lines the Mg(2+) pocket. Aspartate 51 is a catalytic residue. Residues aspartate 120 and glutamate 123 each coordinate Mg(2+). Glutamate 123 is a catalytic residue. Positions aspartate 161–valine 230 constitute a DRBM domain.

The protein belongs to the ribonuclease III family. In terms of assembly, homodimer. The cofactor is Mg(2+).

It localises to the cytoplasm. It carries out the reaction Endonucleolytic cleavage to 5'-phosphomonoester.. Digests double-stranded RNA. Involved in the processing of primary rRNA transcript to yield the immediate precursors to the large and small rRNAs (23S and 16S). Processes some mRNAs, and tRNAs when they are encoded in the rRNA operon. Processes pre-crRNA and tracrRNA of type II CRISPR loci if present in the organism. In Clostridium tetani (strain Massachusetts / E88), this protein is Ribonuclease 3.